Consider the following 372-residue polypeptide: L-selectin (372 aa).

A signal peptide spans 1–28 (MIFPRKCQSTQRDLWNIFKLWGWTMLCC). A propeptide spanning residues 29-38 (DFLAHHGTDC) is cleaved from the precursor. Over 39–332 (WTYHYSENPM…FSMIKEGDYN (294 aa)) the chain is Extracellular. The C-type lectin domain occupies 55 to 155 (RFCRENYTDL…ACHKPKAALC (101 aa)). 10 cysteine pairs are disulfide-bonded: Cys57–Cys155, Cys128–Cys147, Cys128–Cys160, Cys160–Cys171, Cys165–Cys180, Cys182–Cys191, Cys197–Cys241, Cys227–Cys254, Cys259–Cys303, and Cys289–Cys316. N-linked (GlcNAc...) asparagine glycosylation is found at Asn60 and Asn104. Glu118, Asn120, Glu126, Asn143, and Asp144 together coordinate Ca(2+). Positions 156–192 (YTASCQPWSCSGHGECVEIINNYTCNCDVGYYGPQCQ) constitute an EGF-like domain. Asn177 carries an N-linked (GlcNAc...) asparagine glycan. 2 consecutive Sushi domains span residues 195-256 (IQCE…TCQV) and 257-318 (IQCE…ICQK). Residues Asn226, Asn232, Asn246, and Asn271 are each glycosylated (N-linked (GlcNAc...) asparagine). The chain crosses the membrane as a helical span at residues 333–355 (PLFIPVAVMVTAFSGLAFIIWLA). The Cytoplasmic portion of the chain corresponds to 356-372 (RRLKKGKKSKKSMDDPY).

The protein belongs to the selectin/LECAM family. In terms of assembly, interaction with SELPLG/PSGL1 and PODXL2 is required for promoting recruitment and rolling of leukocytes. This interaction is dependent on the sialyl Lewis X glycan modification of SELPLG and PODXL2, and tyrosine sulfation modifications of SELPLG. Sulfation on 'Tyr-51' of SELPLG is important for L-selectin binding. N-glycosylated.

It localises to the cell membrane. In terms of biological role, calcium-dependent lectin that mediates cell adhesion by binding to glycoproteins on neighboring cells. Mediates the adherence of lymphocytes to endothelial cells of high endothelial venules in peripheral lymph nodes. Promotes initial tethering and rolling of leukocytes in endothelia. This Macaca mulatta (Rhesus macaque) protein is L-selectin (SELL).